A 343-amino-acid chain; its full sequence is Phosphate acyltransferase (343 aa).

Belongs to the PlsX family. In terms of assembly, homodimer. Probably interacts with PlsY.

It is found in the cytoplasm. The enzyme catalyses a fatty acyl-[ACP] + phosphate = an acyl phosphate + holo-[ACP]. It functions in the pathway lipid metabolism; phospholipid metabolism. In terms of biological role, catalyzes the reversible formation of acyl-phosphate (acyl-PO(4)) from acyl-[acyl-carrier-protein] (acyl-ACP). This enzyme utilizes acyl-ACP as fatty acyl donor, but not acyl-CoA. The sequence is that of Phosphate acyltransferase from Halorhodospira halophila (strain DSM 244 / SL1) (Ectothiorhodospira halophila (strain DSM 244 / SL1)).